Consider the following 396-residue polypeptide: S-adenosylmethionine synthase (396 aa).

His16 is a binding site for ATP. Asp18 lines the Mg(2+) pocket. Glu44 lines the K(+) pocket. L-methionine contacts are provided by Glu57 and Gln100. The segment at 100–110 is flexible loop; the sequence is QSVDIAQGVDR. ATP contacts are provided by residues 165-167, Asp240, 246-247, Ala263, and Lys267; these read DAK and RK. Asp240 provides a ligand contact to L-methionine. Lys271 contributes to the L-methionine binding site.

Belongs to the AdoMet synthase family. Homotetramer; dimer of dimers. Requires Mg(2+) as cofactor. K(+) serves as cofactor.

It is found in the cytoplasm. The catalysed reaction is L-methionine + ATP + H2O = S-adenosyl-L-methionine + phosphate + diphosphate. It participates in amino-acid biosynthesis; S-adenosyl-L-methionine biosynthesis; S-adenosyl-L-methionine from L-methionine: step 1/1. Functionally, catalyzes the formation of S-adenosylmethionine (AdoMet) from methionine and ATP. The overall synthetic reaction is composed of two sequential steps, AdoMet formation and the subsequent tripolyphosphate hydrolysis which occurs prior to release of AdoMet from the enzyme. The protein is S-adenosylmethionine synthase of Pseudomonas putida (strain W619).